Consider the following 621-residue polypeptide: 1-deoxy-D-xylulose-5-phosphate synthase (621 aa).

Residues histidine 80 and 121–123 (GHS) each bind thiamine diphosphate. Position 152 (aspartate 152) interacts with Mg(2+). Thiamine diphosphate is bound by residues 153 to 154 (GA), asparagine 181, tyrosine 288, and glutamate 371. Mg(2+) is bound at residue asparagine 181.

This sequence belongs to the transketolase family. DXPS subfamily. In terms of assembly, homodimer. The cofactor is Mg(2+). Thiamine diphosphate is required as a cofactor.

The catalysed reaction is D-glyceraldehyde 3-phosphate + pyruvate + H(+) = 1-deoxy-D-xylulose 5-phosphate + CO2. It functions in the pathway metabolic intermediate biosynthesis; 1-deoxy-D-xylulose 5-phosphate biosynthesis; 1-deoxy-D-xylulose 5-phosphate from D-glyceraldehyde 3-phosphate and pyruvate: step 1/1. Catalyzes the acyloin condensation reaction between C atoms 2 and 3 of pyruvate and glyceraldehyde 3-phosphate to yield 1-deoxy-D-xylulose-5-phosphate (DXP). This chain is 1-deoxy-D-xylulose-5-phosphate synthase, found in Pectobacterium atrosepticum (strain SCRI 1043 / ATCC BAA-672) (Erwinia carotovora subsp. atroseptica).